The following is a 261-amino-acid chain: Hemin import ATP-binding protein HmuV (261 aa).

Residues 5 to 241 (YTAENLTFTR…DALAHWYGAQ (237 aa)) enclose the ABC transporter domain. 37 to 44 (GPNGAGKS) is an ATP binding site.

It belongs to the ABC transporter superfamily. Heme (hemin) importer (TC 3.A.1.14.5) family. The complex is composed of two ATP-binding proteins (HmuV), two transmembrane proteins (HmuU) and a solute-binding protein (HmuT).

Its subcellular location is the cell inner membrane. In terms of biological role, part of the ABC transporter complex HmuTUV involved in hemin import. Responsible for energy coupling to the transport system. This Enterobacter cloacae protein is Hemin import ATP-binding protein HmuV.